A 99-amino-acid polypeptide reads, in one-letter code: MAQGQRKFQAHKPAKSKTAAAASEKNRGPRKGGRVIAPKKARVVQQQKLKKNLEVGIRKKIEHDVVMKASSSLPKKLALLKAPAKKKGAAAATSSKTPS.

Residues 1-36 (MAQGQRKFQAHKPAKSKTAAAASEKNRGPRKGGRVI) form a disordered region.

This sequence belongs to the UPF0390 family.

Functionally, may have a potential role in hypercalcemia of malignancy. This Homo sapiens (Human) protein is Leydig cell tumor 10 kDa protein homolog (C19orf53).